Reading from the N-terminus, the 158-residue chain is Endoribonuclease YbeY (158 aa).

The Zn(2+) site is built by H118, H122, and H128.

Belongs to the endoribonuclease YbeY family. It depends on Zn(2+) as a cofactor.

The protein localises to the cytoplasm. In terms of biological role, single strand-specific metallo-endoribonuclease involved in late-stage 70S ribosome quality control and in maturation of the 3' terminus of the 16S rRNA. This is Endoribonuclease YbeY from Alteromonas mediterranea (strain DSM 17117 / CIP 110805 / LMG 28347 / Deep ecotype).